Consider the following 152-residue polypeptide: UPF0178 protein SAS0646 (152 aa).

This sequence belongs to the UPF0178 family.

The protein is UPF0178 protein SAS0646 of Staphylococcus aureus (strain MSSA476).